The chain runs to 279 residues: Urease accessory protein UreD (279 aa).

It belongs to the UreD family. In terms of assembly, ureD, UreF and UreG form a complex that acts as a GTP-hydrolysis-dependent molecular chaperone, activating the urease apoprotein by helping to assemble the nickel containing metallocenter of UreC. The UreE protein probably delivers the nickel.

It is found in the cytoplasm. In terms of biological role, required for maturation of urease via the functional incorporation of the urease nickel metallocenter. This Pseudomonas fluorescens (strain ATCC BAA-477 / NRRL B-23932 / Pf-5) protein is Urease accessory protein UreD.